Reading from the N-terminus, the 338-residue chain is MSVTGLPFDDFRTLLRDLPGPDPRALVAARERDAQLTKPPGALGRLEEIAFWLAAWTGRAPAVTRPLVAIFAGNHGVTKQGITPFPPSVTQQMVENFAAGGAAINQICVTYDLGLKVFDLALDYPTGDITEEPALSERDCAATMAFGMEAIAGGTDLLCIGEMGIGNTTIAAAIHYALYGGTAAEWVGPGTGSEGEMLKRKIAAVEKAAALHREHLSDPLEVLRRLGGREIAAMAGAILAARMERIPVIIDGYVATAAASILKAANPSALDHCLIGHVSAEPGHLKAIDKLGKTPLLALGMRLGEGTGAALAAGIVKAAAACHSGMATFESAGVTNKH.

Glutamate 305 serves as the catalytic Proton acceptor.

The protein belongs to the CobT family.

It carries out the reaction 5,6-dimethylbenzimidazole + nicotinate beta-D-ribonucleotide = alpha-ribazole 5'-phosphate + nicotinate + H(+). It functions in the pathway nucleoside biosynthesis; alpha-ribazole biosynthesis; alpha-ribazole from 5,6-dimethylbenzimidazole: step 1/2. Catalyzes the synthesis of alpha-ribazole-5'-phosphate from nicotinate mononucleotide (NAMN) and 5,6-dimethylbenzimidazole (DMB). The sequence is that of Nicotinate-nucleotide--dimethylbenzimidazole phosphoribosyltransferase from Rhizobium rhizogenes (strain K84 / ATCC BAA-868) (Agrobacterium radiobacter).